We begin with the raw amino-acid sequence, 412 residues long: Alanyl-tRNA editing protein Aarsd1 (412 aa).

The Zn(2+) site is built by His109 and His113. The residue at position 174 (Ser174) is a Phosphoserine. Zn(2+) contacts are provided by Cys209 and His213.

Belongs to the class-II aminoacyl-tRNA synthetase family. Alax-L subfamily. It depends on Zn(2+) as a cofactor.

The protein localises to the cytoplasm. In terms of biological role, functions in trans to edit the amino acid moiety from incorrectly charged Ser-tRNA(Ala). The sequence is that of Alanyl-tRNA editing protein Aarsd1 (Aarsd1) from Mus musculus (Mouse).